The chain runs to 458 residues: Adenylosuccinate synthetase (458 aa).

Residues 17 to 23 (GDEGKGK) and 45 to 47 (GHT) each bind GTP. The active-site Proton acceptor is the D18. D18 and G45 together coordinate Mg(2+). IMP contacts are provided by residues 18–21 (DEGK), 43–46 (NAGH), T137, R151, Q247, T262, and R330. The active-site Proton donor is the H46. 326–332 (VTTGRSR) lines the substrate pocket. GTP contacts are provided by residues R332, 358–360 (KLD), and 440–442 (STS).

It belongs to the adenylosuccinate synthetase family. As to quaternary structure, homodimer. Mg(2+) is required as a cofactor.

The protein resides in the cytoplasm. The enzyme catalyses IMP + L-aspartate + GTP = N(6)-(1,2-dicarboxyethyl)-AMP + GDP + phosphate + 2 H(+). It functions in the pathway purine metabolism; AMP biosynthesis via de novo pathway; AMP from IMP: step 1/2. Plays an important role in the de novo pathway of purine nucleotide biosynthesis. Catalyzes the first committed step in the biosynthesis of AMP from IMP. The chain is Adenylosuccinate synthetase from Acidovorax ebreus (strain TPSY) (Diaphorobacter sp. (strain TPSY)).